A 417-amino-acid chain; its full sequence is NADH-quinone oxidoreductase subunit D (417 aa).

Belongs to the complex I 49 kDa subunit family. NDH-1 is composed of 14 different subunits. Subunits NuoB, C, D, E, F, and G constitute the peripheral sector of the complex.

Its subcellular location is the cell inner membrane. The catalysed reaction is a quinone + NADH + 5 H(+)(in) = a quinol + NAD(+) + 4 H(+)(out). In terms of biological role, NDH-1 shuttles electrons from NADH, via FMN and iron-sulfur (Fe-S) centers, to quinones in the respiratory chain. The immediate electron acceptor for the enzyme in this species is believed to be ubiquinone. Couples the redox reaction to proton translocation (for every two electrons transferred, four hydrogen ions are translocated across the cytoplasmic membrane), and thus conserves the redox energy in a proton gradient. The protein is NADH-quinone oxidoreductase subunit D of Burkholderia multivorans (strain ATCC 17616 / 249).